Here is a 145-residue protein sequence, read N- to C-terminus: Transcription antitermination protein NusB (145 aa).

The protein belongs to the NusB family.

In terms of biological role, involved in transcription antitermination. Required for transcription of ribosomal RNA (rRNA) genes. Binds specifically to the boxA antiterminator sequence of the ribosomal RNA (rrn) operons. This is Transcription antitermination protein NusB from Burkholderia vietnamiensis (strain G4 / LMG 22486) (Burkholderia cepacia (strain R1808)).